The sequence spans 464 residues: Glutamate--tRNA ligase (464 aa).

Positions 9-19 match the 'HIGH' region motif; that stretch reads PSPTGYLHIGG. The 'KMSKS' region signature appears at 242 to 246; that stretch reads KISKR. K245 is a binding site for ATP.

It belongs to the class-I aminoacyl-tRNA synthetase family. Glutamate--tRNA ligase type 1 subfamily. In terms of assembly, monomer.

The protein localises to the cytoplasm. The catalysed reaction is tRNA(Glu) + L-glutamate + ATP = L-glutamyl-tRNA(Glu) + AMP + diphosphate. Catalyzes the attachment of glutamate to tRNA(Glu) in a two-step reaction: glutamate is first activated by ATP to form Glu-AMP and then transferred to the acceptor end of tRNA(Glu). In Neisseria meningitidis serogroup A / serotype 4A (strain DSM 15465 / Z2491), this protein is Glutamate--tRNA ligase.